A 528-amino-acid chain; its full sequence is Proteinaceous RNase P 2 (528 aa).

The span at 1–16 (MAASDQHRSRRHDESS) shows a compositional bias: basic and acidic residues. The disordered stretch occupies residues 1–28 (MAASDQHRSRRHDESSSRPNKKKKVSRN). PPR repeat units follow at residues 29-64 (PETNLLFNLNSCSKSKDLSAALALYDAAITSSEVRL), 72-107 (LLYLCSASITDISLQYLAIDRGFEIFDRMVSSGISP), 108-142 (NEASVTSVARLAAAKGNGDYAFKVVKEFVSVGGVS), and 145-179 (RLRTYAPALLCFCEKLEAEKGYEVEEHMEAAGIAL). In terms of domain architecture, PRORP spans 275-511 (VSSTGRCLSC…NEESSRTWMC (237 aa)). Cys-281 and Cys-284 together coordinate Zn(2+). Mg(2+) is bound by residues Asp-343, Asp-421, Asp-422, and Asp-440. Residues His-494 and Cys-511 each coordinate Zn(2+).

It belongs to the PPR family. P subfamily. In terms of assembly, monomer; forms dimers in crystallo but monomers in solution. Mg(2+) is required as a cofactor.

The protein resides in the nucleus. The catalysed reaction is Endonucleolytic cleavage of RNA, removing 5'-extranucleotides from tRNA precursor.. In terms of biological role, endonuclease RNase P responsible for the 5' maturation of tRNA precursors. Preferentially binds precursor tRNAs containing short 5' leaders and 3' trailers. Also involved in the maturation of mRNA and small nucleolar RNA (snoRNA). The protein is Proteinaceous RNase P 2 (PRORP2) of Arabidopsis thaliana (Mouse-ear cress).